The following is a 637-amino-acid chain: MNNWSIDDARASYNVNYWSQGLYGISDEGEVTVSPDPNRPDCKIGLNELAKDMVKAGVALPVLVRFPQILHHRVNSLCQAFNQAIQKYKYEADYLLVYPIKVNQQQTVVEEILASQVEKEVPQLGLEAGSKPELLAVLAMAQKASSVIICNGYKDKEYIRLALIGEKLGHKVYIVLEKMSELKVVLEQAKELGVTPRLGLRVRLAFQGKGKWQASGGEKSKFGLSAAQVLKVIELLQHEEMLDSLELLHFHLGSQIANIRDIRQGVSEAGRFYCELMKLGAQVKCFDVGGGLAVDYDGTRSQSNNSMNYGLTEYANNIVSVLTDMCKEYEQPMPRIISESGRYLTAHHAVLLTDVIGTESYKPETILPPSEDAPLLLQNMWQSWTEVSGKADQRALIEIFHDCQSDLTEVHSLFALGQLSLADRAWAEQINLRVCHELQGSMSSKYRYHRPIIDELNEKLADKFFVNFSLFQSLPDAWGIDQVFPVMPLSGLDKAPERRAVMLDITCDSDGIVDQYVDGQGIETTLPVPAWTQESPYLIGFFLVGAYQEILGDMHNLFGDTNSAVVRVDENGRRNIDSVLEGDTVADVLRYVNLEAVSFMRTYEELVNKHIVADERSNILEELQLGLKGYTYLEDFS.

K101 carries the N6-(pyridoxal phosphate)lysine modification. Residue 286–296 (FDVGGGLAVDY) coordinates substrate.

It belongs to the Orn/Lys/Arg decarboxylase class-II family. SpeA subfamily. The cofactor is Mg(2+). It depends on pyridoxal 5'-phosphate as a cofactor.

The catalysed reaction is L-arginine + H(+) = agmatine + CO2. Its pathway is amine and polyamine biosynthesis; agmatine biosynthesis; agmatine from L-arginine: step 1/1. Functionally, catalyzes the biosynthesis of agmatine from arginine. The protein is Biosynthetic arginine decarboxylase of Shewanella piezotolerans (strain WP3 / JCM 13877).